The sequence spans 171 residues: Small ribosomal subunit protein uS5 (171 aa).

Residues 14–77 form the S5 DRBM domain; the sequence is LKEKLVMVNR…EKAKKKLLKI (64 aa).

Belongs to the universal ribosomal protein uS5 family. Part of the 30S ribosomal subunit. Contacts proteins S4 and S8.

In terms of biological role, with S4 and S12 plays an important role in translational accuracy. Located at the back of the 30S subunit body where it stabilizes the conformation of the head with respect to the body. This Karelsulcia muelleri (strain GWSS) (Sulcia muelleri) protein is Small ribosomal subunit protein uS5.